Consider the following 582-residue polypeptide: Kelch-like protein diablo (582 aa).

A disordered region spans residues 1–22 (MGDVLISDRPPSPARLSHTSEK). The region spanning 41–108 (CDVVINVSGR…CYTSHIVVEE (68 aa)) is the BTB domain. Positions 143 to 245 (CLGIRAFADT…SPKFLVGTVG (103 aa)) constitute a BACK domain. Kelch repeat units follow at residues 292-338 (VLFA…VLND), 340-386 (LYAV…VLDG), 387-433 (FLYA…VLGG), 435-480 (LYAI…VFNN), 482-527 (IYAV…VVNG), and 528-574 (QLYA…VMRA).

The protein operates within protein modification; protein ubiquitination. Probable substrate-specific adapter of an E3 ubiquitin-protein ligase complex which mediates the ubiquitination and subsequent proteasomal degradation of target proteins. May have a role in synapse differentiation and growth. This Culex quinquefasciatus (Southern house mosquito) protein is Kelch-like protein diablo.